We begin with the raw amino-acid sequence, 240 residues long: Ion-translocating oxidoreductase complex subunit E (240 aa).

5 helical membrane-spanning segments follow: residues 41–61, 71–91, 95–115, 130–150, and 184–204; these read LGLG…VSLV, LPAF…LMQA, ELYQ…VILG, SFDG…LGGL, and GFLL…LIAL.

It belongs to the NqrDE/RnfAE family. The complex is composed of six subunits: RnfA, RnfB, RnfC, RnfD, RnfE and RnfG.

The protein resides in the cell inner membrane. Its function is as follows. Part of a membrane-bound complex that couples electron transfer with translocation of ions across the membrane. This Pseudomonas aeruginosa (strain ATCC 15692 / DSM 22644 / CIP 104116 / JCM 14847 / LMG 12228 / 1C / PRS 101 / PAO1) protein is Ion-translocating oxidoreductase complex subunit E.